Reading from the N-terminus, the 386-residue chain is Cytochrome b (386 aa).

The next 4 helical transmembrane spans lie at 32–52, 76–98, 113–133, and 179–199; these read FGSLLALCLGIQIVTGVTLAM, WMIRYLHANTASFFFLFVYLHIG, PWSIGVIILILMMATAFLGYV, and FFSLHYLLPFILAALAVMHLL. Heme b-binding residues include histidine 82 and histidine 96. The heme b site is built by histidine 183 and histidine 197. Histidine 202 serves as a coordination point for a ubiquinone. The next 4 membrane-spanning stretches (helical) occupy residues 225–245, 289–309, 321–341, and 348–368; these read YTFKDLVTIFLFFLVLALFLF, LGGVIAMFGSLLILLAMPLLD, LMKFFFWLLVVDFLILLWCGS, and FITLGQFATTFYFSWFLIIVP.

Belongs to the cytochrome b family. Fungal cytochrome b-c1 complex contains 10 subunits; 3 respiratory subunits, 2 core proteins and 5 low-molecular weight proteins. Cytochrome b-c1 complex is a homodimer. Requires heme b as cofactor.

The protein localises to the mitochondrion inner membrane. Component of the ubiquinol-cytochrome c reductase complex (complex III or cytochrome b-c1 complex) that is part of the mitochondrial respiratory chain. The b-c1 complex mediates electron transfer from ubiquinol to cytochrome c. Contributes to the generation of a proton gradient across the mitochondrial membrane that is then used for ATP synthesis. The chain is Cytochrome b (cob) from Rhizopus oryzae (Mucormycosis agent).